A 479-amino-acid polypeptide reads, in one-letter code: Sulfate adenylyltransferase subunit 1 (479 aa).

In terms of domain architecture, tr-type G spans 25-239; that stretch reads KSLLRFLTCG…EVLETVDIQR (215 aa). The segment at 34-41 is G1; that stretch reads GSVDDGKS. GTP is bound at residue 34–41; the sequence is GSVDDGKS. The G2 stretch occupies residues 92-96; sequence GITID. The G3 stretch occupies residues 113 to 116; sequence DTPG. GTP is bound by residues 113 to 117 and 168 to 171; these read DTPGH and NKMD. Residues 168 to 171 are G4; it reads NKMD. The segment at 206-208 is G5; the sequence is SAL.

The protein belongs to the TRAFAC class translation factor GTPase superfamily. Classic translation factor GTPase family. CysN/NodQ subfamily. In terms of assembly, heterodimer composed of CysD, the smaller subunit, and CysN.

The catalysed reaction is sulfate + ATP + H(+) = adenosine 5'-phosphosulfate + diphosphate. Its pathway is sulfur metabolism; hydrogen sulfide biosynthesis; sulfite from sulfate: step 1/3. Functionally, with CysD forms the ATP sulfurylase (ATPS) that catalyzes the adenylation of sulfate producing adenosine 5'-phosphosulfate (APS) and diphosphate, the first enzymatic step in sulfur assimilation pathway. APS synthesis involves the formation of a high-energy phosphoric-sulfuric acid anhydride bond driven by GTP hydrolysis by CysN coupled to ATP hydrolysis by CysD. The polypeptide is Sulfate adenylyltransferase subunit 1 (Salmonella agona (strain SL483)).